Here is a 350-residue protein sequence, read N- to C-terminus: Neurogenic differentiation factor 1 (350 aa).

Residues 1 to 91 form a disordered region; that stretch reads MTKSYSEESM…KKKKMTKARM (91 aa). The segment covering 7–18 has biased composition (low complexity); that stretch reads EESMMLESQSSS. The segment covering 22 to 38 has biased composition (basic and acidic residues); that stretch reads DKCHSSSQDERDVDKTS. Over residues 44–72 the composition is skewed to acidic residues; the sequence is DMEDDDDAGLNRLEDEDDEEEEEEEEDGD. Over residues 76–91 the composition is skewed to basic residues; it reads PKRRGPKKKKMTKARM. A Nuclear localization signal motif is present at residues 82 to 88; sequence KKKKMTK. The region spanning 96-148 is the bHLH domain; the sequence is MRRMKANARERNRMHGLNDALESLRKVVPCYSKTQKLSKIETLRLAKNYIWAL.

As to quaternary structure, efficient DNA binding requires dimerization with another bHLH protein. In the embryo, expressed broadly in a subset of primary neurons in the brain and spinal cord. At 28 hours post-fertilization (hpf), regions of expression include telencephalon, olfactory placode, epiphysis, cranial ganglia, acoustic ganglia, Rohon-Beard mechano-sensory neurons and motoneurons. In 2 day postembryonic brain, expressed in many brain regions but absent from subpallium, the ventral preoptic region, ventral thalamus and hypothalamus; sites of expression extend laterally from the ventricular proliferative regions and correspond to freshly determined cell populations. In adult, expressed in all tissues examined with highest levels in brain.

Its subcellular location is the cytoplasm. The protein resides in the nucleus. In terms of biological role, may act as a transcriptional activator. Differentiation factor required for neurogenesis. Acts as an upstream activator of isl1. The chain is Neurogenic differentiation factor 1 from Danio rerio (Zebrafish).